We begin with the raw amino-acid sequence, 1053 residues long: SPX and EXS domain-containing protein 2 (1053 aa).

The SPX domain occupies 1-339 (MKFRDYLKDN…PRIAKECRKY (339 aa)). The span at 54-88 (NNINKNNNNNNNNNNNNNNNNNNNNNINNNNNNNN) shows a compositional bias: low complexity. The tract at residues 54-137 (NNINKNNNNN…VGDEDGGDDD (84 aa)) is disordered. Over residues 95-112 (QTNSNNISIPNQMAPQES) the composition is skewed to polar residues. Residues 113 to 122 (SGEDEDDENE) show a composition bias toward acidic residues. 10 consecutive transmembrane segments (helical) span residues 391 to 411 (YIIG…IFKF), 427 to 447 (MAWL…LFAL), 476 to 496 (YLMY…VYVD), 510 to 530 (YLLL…ILPF), 561 to 581 (FFMS…QQIV), 595 to 615 (GVCF…PFYW), 630 to 652 (FFPH…LLWV), 666 to 686 (ILWF…DFTV), 712 to 732 (WVYY…LIVF), and 745 to 765 (PLFL…FIFF). The EXS domain maps to 596 to 798 (VCFKHKAVIF…SQDYKNYMEE (203 aa)). Disordered regions lie at residues 799-871 (KKSR…VDDE) and 1023-1053 (HPEL…NKSR). Residues 842–853 (DDDDDDESIDSD) show a composition bias toward acidic residues. A compositionally biased stretch (polar residues) spans 1023–1040 (HPELNSSNRNQVDPNSPM).

It belongs to the SYG1 (TC 2.A.94) family.

The protein localises to the membrane. The sequence is that of SPX and EXS domain-containing protein 2 from Dictyostelium discoideum (Social amoeba).